The primary structure comprises 350 residues: GTPase Obg (350 aa).

In terms of domain architecture, Obg spans 1 to 175 (MFVDNIRIFA…GVFFMELRRI (175 aa)). An OBG-type G domain is found at 176–345 (ADAGLVGYPN…LRNRLDELVG (170 aa)). Residues 182–189 (GYPNAGKS), 207–211 (FTTLQ), 229–232 (DIPG), 299–302 (NKMD), and 326–328 (SAL) contribute to the GTP site. The Mg(2+) site is built by Ser189 and Thr209.

The protein belongs to the TRAFAC class OBG-HflX-like GTPase superfamily. OBG GTPase family. As to quaternary structure, monomer. It depends on Mg(2+) as a cofactor.

The protein resides in the cytoplasm. An essential GTPase which binds GTP, GDP and possibly (p)ppGpp with moderate affinity, with high nucleotide exchange rates and a fairly low GTP hydrolysis rate. Plays a role in control of the cell cycle, stress response, ribosome biogenesis and in those bacteria that undergo differentiation, in morphogenesis control. This is GTPase Obg from Akkermansia muciniphila (strain ATCC BAA-835 / DSM 22959 / JCM 33894 / BCRC 81048 / CCUG 64013 / CIP 107961 / Muc).